A 361-amino-acid chain; its full sequence is Chorismate synthase (361 aa).

NADP(+) is bound by residues Arg-48 and Arg-54. FMN is bound by residues 125 to 127, 238 to 239, Gly-278, 293 to 297, and Arg-319; these read RSS, NA, and KPTSS.

Belongs to the chorismate synthase family. As to quaternary structure, homotetramer. FMNH2 is required as a cofactor.

It catalyses the reaction 5-O-(1-carboxyvinyl)-3-phosphoshikimate = chorismate + phosphate. Its pathway is metabolic intermediate biosynthesis; chorismate biosynthesis; chorismate from D-erythrose 4-phosphate and phosphoenolpyruvate: step 7/7. Functionally, catalyzes the anti-1,4-elimination of the C-3 phosphate and the C-6 proR hydrogen from 5-enolpyruvylshikimate-3-phosphate (EPSP) to yield chorismate, which is the branch point compound that serves as the starting substrate for the three terminal pathways of aromatic amino acid biosynthesis. This reaction introduces a second double bond into the aromatic ring system. In Salmonella arizonae (strain ATCC BAA-731 / CDC346-86 / RSK2980), this protein is Chorismate synthase.